Reading from the N-terminus, the 273-residue chain is MSKLQDVIVQEMKVKKRIDSAEEIMELKQFIKNYVQSHSFIKSLVLGISGGQDSTLVGKLVQMSVNELREEGIDCTFIAVKLPYGVQKDADEVEQALRFIEPDEIVTVNIKPAVDQSVQSLKEAGIVLTDFQKGNEKARERMKVQFSIASNRQGIVVGTDHSAENITGFYTKYGDGAADIAPIFGLNKRQGRQLLAYLGAPKELYEKTPTADLEDDKPQLPDEDALGVTYEAIDNYLEGKPVTPEEQKVIENHYIRNAHKRELAYTRYTWPKS.

An ATP-binding site is contributed by 47–54 (GISGGQDS). Asp53 provides a ligand contact to Mg(2+). Position 139 (Arg139) interacts with deamido-NAD(+). Thr159 contributes to the ATP binding site. A Mg(2+)-binding site is contributed by Glu164. Deamido-NAD(+)-binding residues include Lys172 and Asp179. 2 residues coordinate ATP: Lys188 and Thr210. 259-260 (HK) contributes to the deamido-NAD(+) binding site.

Belongs to the NAD synthetase family. Homodimer.

The enzyme catalyses deamido-NAD(+) + NH4(+) + ATP = AMP + diphosphate + NAD(+) + H(+). It functions in the pathway cofactor biosynthesis; NAD(+) biosynthesis; NAD(+) from deamido-NAD(+) (ammonia route): step 1/1. Catalyzes the ATP-dependent amidation of deamido-NAD to form NAD. Uses ammonia as a nitrogen source. The protein is NH(3)-dependent NAD(+) synthetase of Staphylococcus aureus (strain COL).